The sequence spans 204 residues: uncharacterized protein (204 aa).

4 consecutive transmembrane segments (helical) span residues 21-50 (AWIV…LLFF), 92-114 (FFTA…WWWF), 150-172 (LGLR…VLSI), and 176-198 (LLAS…ETIL).

The protein localises to the cell membrane. This is an uncharacterized protein from Aquifex aeolicus (strain VF5).